We begin with the raw amino-acid sequence, 290 residues long: Lipoyl synthase (290 aa).

The [4Fe-4S] cluster site is built by Cys44, Cys49, Cys55, Cys70, Cys74, Cys77, and Ser281. One can recognise a Radical SAM core domain in the interval 56–270 (WRCGTATFMI…KQIGLEKGFS (215 aa)).

The protein belongs to the radical SAM superfamily. Lipoyl synthase family. It depends on [4Fe-4S] cluster as a cofactor.

The protein resides in the cytoplasm. It catalyses the reaction [[Fe-S] cluster scaffold protein carrying a second [4Fe-4S](2+) cluster] + N(6)-octanoyl-L-lysyl-[protein] + 2 oxidized [2Fe-2S]-[ferredoxin] + 2 S-adenosyl-L-methionine + 4 H(+) = [[Fe-S] cluster scaffold protein] + N(6)-[(R)-dihydrolipoyl]-L-lysyl-[protein] + 4 Fe(3+) + 2 hydrogen sulfide + 2 5'-deoxyadenosine + 2 L-methionine + 2 reduced [2Fe-2S]-[ferredoxin]. Its pathway is protein modification; protein lipoylation via endogenous pathway; protein N(6)-(lipoyl)lysine from octanoyl-[acyl-carrier-protein]: step 2/2. Functionally, catalyzes the radical-mediated insertion of two sulfur atoms into the C-6 and C-8 positions of the octanoyl moiety bound to the lipoyl domains of lipoate-dependent enzymes, thereby converting the octanoylated domains into lipoylated derivatives. The polypeptide is Lipoyl synthase (Treponema denticola (strain ATCC 35405 / DSM 14222 / CIP 103919 / JCM 8153 / KCTC 15104)).